A 453-amino-acid polypeptide reads, in one-letter code: Major fimbrium subunit FimC (453 aa).

Residues 1–28 form the signal peptide; sequence MKMKYFHHPSGLLPRLLLLLLLTMGAVA. Cysteine 29 is lipidated: N-palmitoyl cysteine. Cysteine 29 carries the S-diacylglycerol cysteine lipid modification. Residues 29 to 56 constitute a propeptide that is removed on maturation; sequence CTKEDNPDQPTSDEVATVKMSLDDVEMR.

It belongs to the bacteroidetes fimbrillin superfamily. FimA/Mfa1 family. Fimbriae are composed of a major, structural subunit and the minor components FimC, FimD and FimE. Identified in a complex composed of FimC, FimD and FimE (in vitro). The complex interacts with host extracellular matrix proteins, including fibronectin and type I collagen. Interacts with host CXCR4.

It is found in the fimbrium. It localises to the cell outer membrane. In terms of biological role, minor component of fimbriae. These long, filamentous pili are attached to the cell surface; they mediate biofilm formation, adhesion onto host cells and onto other bacteria that are part of the oral microbiome. They play an important role in invasion of periodontal tissues and are major virulence factors. FimC, FimD and FimE contribute to interaction with host CXCR4 and thereby down-regulate the TLR2-mediated host immune response. This chain is Major fimbrium subunit FimC, found in Porphyromonas gingivalis (strain ATCC 33277 / DSM 20709 / CIP 103683 / JCM 12257 / NCTC 11834 / 2561).